The following is a 162-amino-acid chain: UPF0305 protein MmarC7_1691 (162 aa).

Belongs to the UPF0305 family.

The sequence is that of UPF0305 protein MmarC7_1691 from Methanococcus maripaludis (strain C7 / ATCC BAA-1331).